Here is a 176-residue protein sequence, read N- to C-terminus: Lipoprotein signal peptidase (176 aa).

Helical transmembrane passes span 11–31, 38–58, 76–96, and 101–121; these read AFVA…LDQL, ATMQ…VLVF, WFFT…MHQH, and LLPA…VDRL. Catalysis depends on residues aspartate 128 and aspartate 146. Residues 139–159 traverse the membrane as a helical segment; it reads WPAFNLADSAITLGVGLMLWA.

It belongs to the peptidase A8 family.

The protein localises to the cell inner membrane. It carries out the reaction Release of signal peptides from bacterial membrane prolipoproteins. Hydrolyzes -Xaa-Yaa-Zaa-|-(S,diacylglyceryl)Cys-, in which Xaa is hydrophobic (preferably Leu), and Yaa (Ala or Ser) and Zaa (Gly or Ala) have small, neutral side chains.. The protein operates within protein modification; lipoprotein biosynthesis (signal peptide cleavage). This protein specifically catalyzes the removal of signal peptides from prolipoproteins. In Azoarcus sp. (strain BH72), this protein is Lipoprotein signal peptidase.